We begin with the raw amino-acid sequence, 244 residues long: MQMNFSGLRALVTGAGKGIGRDTVKALHVSGARVVAVTRTNGDLVSLSQECPGIEPVCVDLGDWEATERALGGVGPVDLLVNNAAVALMQPFLDTTKEVFDRSFNVNLRSVFQVSQIVARSMIERGVPGSIVNVSSMVSHVTYPGLAAYSSTKGAMTMLTKSMAMELGPHKIRVNSVNPTVVLTAMGRSVTSDPELARKLKERHPMRKFAEVEDVVNSILFLLSDRSASTSGSSIFVDAGYLAS.

11 to 39 (LVTGAGKGIGRDTVKALHVSGARVVAVTR) lines the NADP(+) pocket. Ser136 is a substrate binding site. The active-site Proton acceptor is the Tyr149. Ser176 carries the phosphoserine modification.

Belongs to the short-chain dehydrogenases/reductases (SDR) family. Homotetramer. Lung (ciliated cells, non-ciliated bronchiolar cells and type-II alveolar pneumocytes). Low expression in all extrapulmonary tissues, including adipose tissue.

The protein localises to the mitochondrion matrix. The enzyme catalyses a secondary alcohol + NADP(+) = a ketone + NADPH + H(+). Its activity is regulated as follows. Allosteric enzyme exhibiting negative cooperativity. Activated 2-5 fold by fatty acids. Functionally, may function in the pulmonary metabolism of endogenous carbonyl compounds, such as aliphatic aldehydes and ketones derived from lipid peroxidation, 3-ketosteroids and fatty aldehydes, as well as in xenobiotic metabolism. In Sus scrofa (Pig), this protein is Carbonyl reductase [NADPH] 2 (CBR2).